A 617-amino-acid chain; its full sequence is Protein fem-1 homolog A (617 aa).

ANK repeat units follow at residues 2 to 32 (DISAAVFNAARDGKLKLMQKLLINKSPEERA), 40 to 70 (EGGTPLLIAARYGHLPVVHFLLERCGANVAL), 82 to 111 (EGAPPLWAASAAGHLPVVKALLEHGAPVNN), 115 to 144 (TNSTPLRAACFDGHLEIVRYLVEHQADLEV), 148 to 177 (HGHTCLMISCYKGHREIAQFLLEKGADVNR), 181 to 210 (KGNTALHDCAESGSLEIMKMLLKCDARMER), and 213 to 242 (YGMTPLLAASVTGHTNIVEFLVHQPRASRE). TPR repeat units lie at residues 245-279 (IHALELLGATFVDKKRDLLGAMRYWRRAMELRWAG) and 339-372 (SYYIRYRGAVYADSGNFERCIRLWKYALDMQQSN). ANK repeat units follow at residues 482-524 (GGHT…DVDS) and 528-557 (DNNTPLHIAAANGCPDIMAALIRAGAHFDA).

The protein belongs to the fem-1 family. As to quaternary structure, component of a CRL2 E3 ubiquitin-protein ligase complex, also named ECS (Elongin BC-CUL2/5-SOCS-box protein) complex.

The protein resides in the mitochondrion. Its subcellular location is the cytoplasm. The protein operates within protein modification; protein ubiquitination. Its function is as follows. Substrate-recognition component of a Cul2-RING (CRL2) E3 ubiquitin-protein ligase complex of the DesCEND (destruction via C-end degrons) pathway, which recognizes a C-degron located at the extreme C terminus of target proteins, leading to their ubiquitination and degradation. The C-degron recognized by the DesCEND pathway is usually a motif of less than ten residues and can be present in full-length proteins, truncated proteins or proteolytically cleaved forms. The CRL2(FEM1A) complex specifically recognizes proteins with an arginine at the C-terminus: recognizes and binds proteins ending with -Lys/Arg-Xaa-Arg and -Lys/Arg-Xaa-Xaa-Arg C-degrons, leading to their ubiquitination and degradation. In Danio rerio (Zebrafish), this protein is Protein fem-1 homolog A.